The chain runs to 565 residues: DNA-binding protein scr1 (565 aa).

Over residues 1 to 19 the composition is skewed to polar residues; the sequence is MSEATTATTTGKPSRSTKN. The interval 1 to 25 is disordered; that stretch reads MSEATTATTTGKPSRSTKNPDAPRP. C2H2-type zinc fingers lie at residues 26–48 and 54–78; these read YKCPLCTKAFYRLEHQTRHIRTH and HVCTFPGCAKRFSRSDELTRHARIH. Disordered regions lie at residues 79–119, 261–303, 390–434, and 466–565; these read TNAN…VHMT, SNAP…STGS, RPVS…DDPS, and ASTP…MTKP. Positions 80–102 are enriched in low complexity; sequence NANSRRNAAAAAAANNSARSSNS. Composition is skewed to polar residues over residues 108 to 119, 276 to 286, and 294 to 303; these read EPSTNNAGVHMT, LPSSSNTSPNH, and GLTSNSSTGS. Over residues 391-413 the composition is skewed to low complexity; it reads PVSPCSTAPSSPTFSTRSFSPTP. Residues 466–478 show a composition bias toward polar residues; the sequence is ASTPASGAVSRTP. Low complexity-rich tracts occupy residues 479-492, 517-526, and 537-555; these read SSVSLSSLSNVNSS, FSSSSRVSVS, and SSSTKSASSSYSTTTPAFS.

It belongs to the creA/MIG C2H2-type zinc-finger protein family.

The protein localises to the nucleus. Its function is as follows. Involved in carbon catabolite repression. Represses the transcription of various genes including the inv1 gene. The sequence is that of DNA-binding protein scr1 (scr1) from Schizosaccharomyces pombe (strain 972 / ATCC 24843) (Fission yeast).